Consider the following 218-residue polypeptide: Probable transaldolase (218 aa).

The active-site Schiff-base intermediate with substrate is Lys87.

It belongs to the transaldolase family. Type 3B subfamily.

The protein resides in the cytoplasm. The catalysed reaction is D-sedoheptulose 7-phosphate + D-glyceraldehyde 3-phosphate = D-erythrose 4-phosphate + beta-D-fructose 6-phosphate. It participates in carbohydrate degradation; pentose phosphate pathway; D-glyceraldehyde 3-phosphate and beta-D-fructose 6-phosphate from D-ribose 5-phosphate and D-xylulose 5-phosphate (non-oxidative stage): step 2/3. Functionally, transaldolase is important for the balance of metabolites in the pentose-phosphate pathway. This is Probable transaldolase from Bacteroides thetaiotaomicron (strain ATCC 29148 / DSM 2079 / JCM 5827 / CCUG 10774 / NCTC 10582 / VPI-5482 / E50).